A 228-amino-acid chain; its full sequence is Interferon-induced transmembrane protein 10 (228 aa).

Residues 1–154 lie on the Extracellular side of the membrane; sequence MREGKRGPPC…PDTTEVNDYY (154 aa). The disordered stretch occupies residues 29–49; sequence AQGPGQCPAPLGDPASTTDGA. A helical membrane pass occupies residues 155–175; that stretch reads LWSIFNFVYLNFCCLGFIALA. S-palmitoyl cysteine attachment occurs at residues C167 and C168. Residues 176–200 are Cytoplasmic-facing; that stretch reads YSLKVRDKKLLNDLNGAVEDAKTAR. Residues 201–221 form a helical membrane-spanning segment; sequence LFNITSSALAASCIILVFIFL. At 222–228 the chain is on the extracellular side; it reads RYPLTDY.

It belongs to the CD225/Dispanin family.

It is found in the cell membrane. This Homo sapiens (Human) protein is Interferon-induced transmembrane protein 10 (IFITM10).